Reading from the N-terminus, the 1120-residue chain is Probable leucine-rich repeat receptor-like protein kinase At1g35710 (1120 aa).

Residues 1-29 form the signal peptide; the sequence is MGFAEKNLYDFRFLLFISIILSCSISASA. Residues 30-783 are Extracellular-facing; that stretch reads TIAEANALLK…RELKKPKKNG (754 aa). Asn-46, Asn-60, Asn-83, and Asn-124 each carry an N-linked (GlcNAc...) asparagine glycan. 27 LRR repeats span residues 78-100, 103-125, 127-150, 151-172, 175-198, 199-221, 223-246, 247-269, 271-294, 295-317, 319-342, 343-365, 367-389, 391-412, 415-437, 439-461, 463-484, 487-510, 535-557, 559-581, 583-605, 607-630, 631-652, 655-677, 678-701, 702-723, and 726-748; these read SIEE…PFIS, NLAY…FGNL, KLIY…GNLK, NLTV…ELGN, SMTD…GNLK, NLMV…LGNM, NLMV…IGNM, SMTN…GNLK, NLTL…LGNI, SMID…GNLK, NLTI…LGNM, SMID…FGNL, NLTY…ELGN, SMIN…FGNF, KLES…VANS, HLTT…TVCK, KLQN…RDCK, DLNF…WEKS, KLGA…IWNM, QLVE…IGNL, NLSR…SFLT, NLES…TFDS, KLHD…SKLT, QLTQ…SSLQ, SLDK…TFEG, and ALTN…PTFR. N-linked (GlcNAc...) asparagine glycosylation is present at Asn-151. N-linked (GlcNAc...) asparagine glycosylation occurs at Asn-295. Residue Asn-343 is glycosylated (N-linked (GlcNAc...) asparagine). Residues Asn-391, Asn-436, Asn-460, Asn-473, and Asn-490 are each glycosylated (N-linked (GlcNAc...) asparagine). Asn-569, Asn-580, Asn-604, Asn-607, Asn-641, and Asn-660 each carry an N-linked (GlcNAc...) asparagine glycan. The N-linked (GlcNAc...) asparagine glycan is linked to Asn-712. Residues 784 to 804 form a helical membrane-spanning segment; that stretch reads NLVVWILVPILGVLVILSICA. Residues 805-1120 are Cytoplasmic-facing; sequence NTFTYCIRKR…TMLSISTTFS (316 aa). Position 848 is a phosphothreonine (Thr-848). The region spanning 851-1120 is the Protein kinase domain; the sequence is FDPTHLIGTG…TMLSISTTFS (270 aa). Residues 857 to 865 and Lys-878 contribute to the ATP site; that span reads IGTGGYSKV. Residues Tyr-929 and Tyr-968 each carry the phosphotyrosine modification. The Proton acceptor role is filled by Asp-981. Ser-1014 carries the phosphoserine modification. Phosphotyrosine is present on residues Tyr-1022 and Tyr-1029. Thr-1030 bears the Phosphothreonine mark.

Belongs to the protein kinase superfamily. Ser/Thr protein kinase family.

It localises to the membrane. It catalyses the reaction L-seryl-[protein] + ATP = O-phospho-L-seryl-[protein] + ADP + H(+). It carries out the reaction L-threonyl-[protein] + ATP = O-phospho-L-threonyl-[protein] + ADP + H(+). The polypeptide is Probable leucine-rich repeat receptor-like protein kinase At1g35710 (Arabidopsis thaliana (Mouse-ear cress)).